A 74-amino-acid chain; its full sequence is ATP synthase subunit c (74 aa).

The next 2 helical transmembrane spans lie at 8–28 (FIGAGLAAIGMIGSGIGVGNI) and 52–72 (IGFAVTEAIALFALVVALMVL).

It belongs to the ATPase C chain family. As to quaternary structure, F-type ATPases have 2 components, F(1) - the catalytic core - and F(0) - the membrane proton channel. F(1) has five subunits: alpha(3), beta(3), gamma(1), delta(1), epsilon(1). F(0) has three main subunits: a(1), b(2) and c(10-14). The alpha and beta chains form an alternating ring which encloses part of the gamma chain. F(1) is attached to F(0) by a central stalk formed by the gamma and epsilon chains, while a peripheral stalk is formed by the delta and b chains.

Its subcellular location is the cell inner membrane. Its function is as follows. F(1)F(0) ATP synthase produces ATP from ADP in the presence of a proton or sodium gradient. F-type ATPases consist of two structural domains, F(1) containing the extramembraneous catalytic core and F(0) containing the membrane proton channel, linked together by a central stalk and a peripheral stalk. During catalysis, ATP synthesis in the catalytic domain of F(1) is coupled via a rotary mechanism of the central stalk subunits to proton translocation. In terms of biological role, key component of the F(0) channel; it plays a direct role in translocation across the membrane. A homomeric c-ring of between 10-14 subunits forms the central stalk rotor element with the F(1) delta and epsilon subunits. This is ATP synthase subunit c from Paramagnetospirillum magneticum (strain ATCC 700264 / AMB-1) (Magnetospirillum magneticum).